A 338-amino-acid chain; its full sequence is Aspartate carbamoyltransferase catalytic subunit (338 aa).

Residues Arg71 and Thr72 each coordinate carbamoyl phosphate. Lys99 serves as a coordination point for L-aspartate. 3 residues coordinate carbamoyl phosphate: Arg121, His151, and Gln154. L-aspartate-binding residues include Arg184 and Arg239. Residues Gly280 and Pro281 each contribute to the carbamoyl phosphate site.

Belongs to the aspartate/ornithine carbamoyltransferase superfamily. ATCase family. In terms of assembly, heterododecamer (2C3:3R2) of six catalytic PyrB chains organized as two trimers (C3), and six regulatory PyrI chains organized as three dimers (R2).

It carries out the reaction carbamoyl phosphate + L-aspartate = N-carbamoyl-L-aspartate + phosphate + H(+). It functions in the pathway pyrimidine metabolism; UMP biosynthesis via de novo pathway; (S)-dihydroorotate from bicarbonate: step 2/3. In terms of biological role, catalyzes the condensation of carbamoyl phosphate and aspartate to form carbamoyl aspartate and inorganic phosphate, the committed step in the de novo pyrimidine nucleotide biosynthesis pathway. The sequence is that of Aspartate carbamoyltransferase catalytic subunit from Stutzerimonas stutzeri (strain A1501) (Pseudomonas stutzeri).